The primary structure comprises 825 residues: Lon protease (825 aa).

The Lon N-terminal domain maps to 41 to 237 (LPIIFIPNTI…KVIQLLLEQK (197 aa)). 388–395 (GPPGTGKT) is a binding site for ATP. The region spanning 625 to 805 (SNPPGVVTGL…DEVLYEALGL (181 aa)) is the Lon proteolytic domain. Catalysis depends on residues Ser-711 and Lys-754.

This sequence belongs to the peptidase S16 family. As to quaternary structure, homohexamer. Organized in a ring with a central cavity.

The protein resides in the cytoplasm. It catalyses the reaction Hydrolysis of proteins in presence of ATP.. In terms of biological role, ATP-dependent serine protease that mediates the selective degradation of mutant and abnormal proteins as well as certain short-lived regulatory proteins. Required for cellular homeostasis and for survival from DNA damage and developmental changes induced by stress. Degrades polypeptides processively to yield small peptide fragments that are 5 to 10 amino acids long. Binds to DNA in a double-stranded, site-specific manner. This is Lon protease from Methanosphaera stadtmanae (strain ATCC 43021 / DSM 3091 / JCM 11832 / MCB-3).